The sequence spans 265 residues: Di-trans,poly-cis-undecaprenyl-diphosphate synthase (265 aa).

Residues 236–238 carry the RXG motif; crucial for prenyltransferase activity motif; the sequence is RFG.

This sequence belongs to the UPP synthase family. It depends on Mg(2+) as a cofactor.

It catalyses the reaction 8 isopentenyl diphosphate + (2E,6E)-farnesyl diphosphate = di-trans,octa-cis-undecaprenyl diphosphate + 8 diphosphate. The protein operates within protein modification; protein glycosylation. It functions in the pathway lipid metabolism. Cis-prenyl transferase involved in the synthesis of dolichol, a long-chain polyprenol that is utilized as a sugar carrier in protein glycosylation in the endoplasmic reticulum (ER). Catalyzes the sequential condensation of isopentenyl pyrophosphate (IPP) with farnesyl pyrophosphate (FPP) to produce a polyprenyl pyrophosphate which contains 11 (major) and 12 (minor) isoprene units. This is Di-trans,poly-cis-undecaprenyl-diphosphate synthase from Giardia intestinalis (strain ATCC 50803 / WB clone C6) (Giardia lamblia).